Consider the following 221-residue polypeptide: Phosphoribosylformylglycinamidine synthase subunit PurQ (221 aa).

A Glutamine amidotransferase type-1 domain is found at 3–221; that stretch reads AAVLVFPGSN…MFASLMQVMA (219 aa). Residue C87 is the Nucleophile of the active site. Residues H195 and E197 contribute to the active site.

As to quaternary structure, part of the FGAM synthase complex composed of 1 PurL, 1 PurQ and 2 PurS subunits.

Its subcellular location is the cytoplasm. It catalyses the reaction N(2)-formyl-N(1)-(5-phospho-beta-D-ribosyl)glycinamide + L-glutamine + ATP + H2O = 2-formamido-N(1)-(5-O-phospho-beta-D-ribosyl)acetamidine + L-glutamate + ADP + phosphate + H(+). The catalysed reaction is L-glutamine + H2O = L-glutamate + NH4(+). It functions in the pathway purine metabolism; IMP biosynthesis via de novo pathway; 5-amino-1-(5-phospho-D-ribosyl)imidazole from N(2)-formyl-N(1)-(5-phospho-D-ribosyl)glycinamide: step 1/2. In terms of biological role, part of the phosphoribosylformylglycinamidine synthase complex involved in the purines biosynthetic pathway. Catalyzes the ATP-dependent conversion of formylglycinamide ribonucleotide (FGAR) and glutamine to yield formylglycinamidine ribonucleotide (FGAM) and glutamate. The FGAM synthase complex is composed of three subunits. PurQ produces an ammonia molecule by converting glutamine to glutamate. PurL transfers the ammonia molecule to FGAR to form FGAM in an ATP-dependent manner. PurS interacts with PurQ and PurL and is thought to assist in the transfer of the ammonia molecule from PurQ to PurL. This Zymomonas mobilis subsp. mobilis (strain ATCC 31821 / ZM4 / CP4) protein is Phosphoribosylformylglycinamidine synthase subunit PurQ.